Here is a 301-residue protein sequence, read N- to C-terminus: Recombination-associated protein RdgC (301 aa).

This sequence belongs to the RdgC family.

It is found in the cytoplasm. Its subcellular location is the nucleoid. May be involved in recombination. The chain is Recombination-associated protein RdgC from Xanthomonas oryzae pv. oryzae (strain MAFF 311018).